The chain runs to 263 residues: Shikimate dehydrogenase (NADP(+)) (263 aa).

Shikimate-binding positions include 16-18 (SKS) and Thr65. The active-site Proton acceptor is the Lys69. The shikimate site is built by Asn90 and Asp105. Residues 125-129 (GAGGS), Ser181, and Leu208 each bind NADP(+). Residue Tyr210 participates in shikimate binding. Gly230 serves as a coordination point for NADP(+). Position 237 (Gln237) interacts with shikimate.

The protein belongs to the shikimate dehydrogenase family. Homodimer.

It catalyses the reaction shikimate + NADP(+) = 3-dehydroshikimate + NADPH + H(+). It participates in metabolic intermediate biosynthesis; chorismate biosynthesis; chorismate from D-erythrose 4-phosphate and phosphoenolpyruvate: step 4/7. Functionally, involved in the biosynthesis of the chorismate, which leads to the biosynthesis of aromatic amino acids. Catalyzes the reversible NADPH linked reduction of 3-dehydroshikimate (DHSA) to yield shikimate (SA). This is Shikimate dehydrogenase (NADP(+)) from Helicobacter pylori (strain ATCC 700392 / 26695) (Campylobacter pylori).